A 128-amino-acid chain; its full sequence is Ribosome-binding factor A (128 aa).

Belongs to the RbfA family. Monomer. Binds 30S ribosomal subunits, but not 50S ribosomal subunits or 70S ribosomes.

The protein localises to the cytoplasm. One of several proteins that assist in the late maturation steps of the functional core of the 30S ribosomal subunit. Associates with free 30S ribosomal subunits (but not with 30S subunits that are part of 70S ribosomes or polysomes). Required for efficient processing of 16S rRNA. May interact with the 5'-terminal helix region of 16S rRNA. The chain is Ribosome-binding factor A from Rickettsia prowazekii (strain Madrid E).